The primary structure comprises 363 residues: Molybdenum import ATP-binding protein ModC (363 aa).

The ABC transporter domain maps to 1 to 230 (MISARFSGRQ…PNLPLIHRPD (230 aa)). ATP is bound at residue 31–38 (GPSGCGKT). The Mop domain occupies 289–359 (DTTILNALPA…LKAMALSAPA (71 aa)).

This sequence belongs to the ABC transporter superfamily. Molybdate importer (TC 3.A.1.8) family. As to quaternary structure, the complex is composed of two ATP-binding proteins (ModC), two transmembrane proteins (ModB) and a solute-binding protein (ModA).

The protein resides in the cell inner membrane. It catalyses the reaction molybdate(out) + ATP + H2O = molybdate(in) + ADP + phosphate + H(+). Its function is as follows. Part of the ABC transporter complex ModABC involved in molybdenum import. Responsible for energy coupling to the transport system. The protein is Molybdenum import ATP-binding protein ModC of Rhodobacter capsulatus (Rhodopseudomonas capsulata).